The chain runs to 449 residues: Exodeoxyribonuclease 7 large subunit (449 aa).

Belongs to the XseA family. Heterooligomer composed of large and small subunits.

It is found in the cytoplasm. It carries out the reaction Exonucleolytic cleavage in either 5'- to 3'- or 3'- to 5'-direction to yield nucleoside 5'-phosphates.. Bidirectionally degrades single-stranded DNA into large acid-insoluble oligonucleotides, which are then degraded further into small acid-soluble oligonucleotides. The sequence is that of Exodeoxyribonuclease 7 large subunit from Salmonella dublin (strain CT_02021853).